Here is a 306-residue protein sequence, read N- to C-terminus: Pseudouridine-5'-phosphate glycosidase (306 aa).

The active-site Proton donor is the Glu-27. Substrate-binding residues include Lys-88 and Val-108. Asp-140 serves as a coordination point for Mn(2+). Residue 142–144 (SAD) coordinates substrate. Residue Lys-161 is the Nucleophile of the active site.

Belongs to the pseudouridine-5'-phosphate glycosidase family. Homotrimer. Mn(2+) is required as a cofactor.

The enzyme catalyses D-ribose 5-phosphate + uracil = psi-UMP + H2O. Catalyzes the reversible cleavage of pseudouridine 5'-phosphate (PsiMP) to ribose 5-phosphate and uracil. Functions biologically in the cleavage direction, as part of a pseudouridine degradation pathway. This is Pseudouridine-5'-phosphate glycosidase from Petrotoga mobilis (strain DSM 10674 / SJ95).